The following is a 1238-amino-acid chain: Chitin synthase 4 (1238 aa).

2 disordered regions span residues 1–93 (MAEP…PERN) and 132–190 (TVSS…RRQK). Residues 14-34 (TRDKSHSPYRESPSRRLRDVE) show a composition bias toward basic and acidic residues. N50 is a glycosylation site (N-linked (GlcNAc...) asparagine). Composition is skewed to polar residues over residues 71 to 80 (SNPNPMSQSD) and 133 to 142 (VSSGSTQQDT). Residues 175 to 190 (RKDTRNLTEEEKRRQK) show a composition bias toward basic and acidic residues. An N-linked (GlcNAc...) asparagine glycan is attached at N180. 2 consecutive transmembrane segments (helical) span residues 200–220 (IWNIYCAVVTFWAPDCLLQCF) and 235–255 (VGLISIILLIAAFVGFLTFGF). N-linked (GlcNAc...) asparagine glycosylation is found at N365, N404, and N426. The helical transmembrane segment at 487-507 (VVLYVSLVFILAIVAAKFFLA) threads the bilayer. 2 disordered regions span residues 548 to 570 (PKITDPASTVTGSDGRTSKRGSM) and 582 to 606 (YAVDRRSSRPPPTTMTSQSSNAKLL). A compositionally biased stretch (polar residues) spans 553–562 (PASTVTGSDG). N-linked (GlcNAc...) asparagine glycosylation is found at N617, N903, and N1030. 3 consecutive transmembrane segments (helical) span residues 1062-1082 (IGTLVLPAAISFTFYLIILSI), 1087-1107 (VPVIPLVLLALILGLPAILIV), and 1115-1135 (YILWMGIYLLSLPIWNFVLPA).

The protein belongs to the chitin synthase family. Class IV subfamily. In terms of processing, maximal activity requires trypsin activation, suggesting a zymogenic nature.

The protein localises to the cell membrane. It catalyses the reaction [(1-&gt;4)-N-acetyl-beta-D-glucosaminyl](n) + UDP-N-acetyl-alpha-D-glucosamine = [(1-&gt;4)-N-acetyl-beta-D-glucosaminyl](n+1) + UDP + H(+). Its activity is regulated as follows. Activity is stimulated by Mg(2+), and is more inhibited by polyoxin D than by nikkomycin. Functionally, polymerizes chitin, a structural polymer of the cell wall and septum, by transferring the sugar moiety of UDP-GlcNAc to the non-reducing end of the growing chitin polymer. CHS4 synthesizes a large amount of chitin and appears to play a role in the process of cell separation. CHS4 is particularly well suited for functioning at the higher temperatures associated with its poorly characterized saprophic environment and with human infection. In Exophiala dermatitidis (Black yeast-like fungus), this protein is Chitin synthase 4.